The primary structure comprises 81 residues: Photosystem I iron-sulfur center (81 aa).

2 consecutive 4Fe-4S ferredoxin-type domains span residues 2–31 (SHTV…MVPW) and 37–68 (GQIA…VRVY). Cysteine 11, cysteine 14, cysteine 17, cysteine 21, cysteine 48, cysteine 51, cysteine 54, and cysteine 58 together coordinate [4Fe-4S] cluster.

The eukaryotic PSI reaction center is composed of at least 11 subunits. The cofactor is [4Fe-4S] cluster.

It localises to the plastid. Its subcellular location is the chloroplast thylakoid membrane. The catalysed reaction is reduced [plastocyanin] + hnu + oxidized [2Fe-2S]-[ferredoxin] = oxidized [plastocyanin] + reduced [2Fe-2S]-[ferredoxin]. In terms of biological role, apoprotein for the two 4Fe-4S centers FA and FB of photosystem I (PSI); essential for photochemical activity. FB is the terminal electron acceptor of PSI, donating electrons to ferredoxin. The C-terminus interacts with PsaA/B/D and helps assemble the protein into the PSI complex. Required for binding of PsaD and PsaE to PSI. PSI is a plastocyanin/cytochrome c6-ferredoxin oxidoreductase, converting photonic excitation into a charge separation, which transfers an electron from the donor P700 chlorophyll pair to the spectroscopically characterized acceptors A0, A1, FX, FA and FB in turn. This is Photosystem I iron-sulfur center from Phaeodactylum tricornutum (strain CCAP 1055/1).